Here is a 154-residue protein sequence, read N- to C-terminus: Large ribosomal subunit protein uL13 (154 aa).

The disordered stretch occupies residues 129 to 154; that stretch reads SQHPHEAQQPEALDVGTLNRKNKRIA.

This sequence belongs to the universal ribosomal protein uL13 family. In terms of assembly, part of the 50S ribosomal subunit.

This protein is one of the early assembly proteins of the 50S ribosomal subunit, although it is not seen to bind rRNA by itself. It is important during the early stages of 50S assembly. This chain is Large ribosomal subunit protein uL13, found in Bartonella bacilliformis (strain ATCC 35685 / KC583 / Herrer 020/F12,63).